Consider the following 746-residue polypeptide: MLLFGLLVAGVADGCDLVPRHLRGRRASGSAGAAASPSAAAAGERQALLTDPCMSLSPPCFTEEDRFSLEALQTIHKQMDDDKDGGIEVDESDEFIREDMKYKDATNKHSHLHREDKHITVEDLWKQWKTSEVHNWTLEDTLQWLIEFVELPQYEKNFRDNNVKGTTLPRIAVHETSFMISQLKISDRSHRQKLQLKALDVVLFGPLTRPPHNWMKDFILTISIVIGVGGCWFAYTQNKTSKEHVAKMMKDLESLQTAEQSLMDLQERLEKAQEENRTVAVEKQNLERKMMDEINYAKEEACRLRELREGAECELSRRQYAEQELEQVRMALKKAEKEFELRSSWSVPDALQKWLQLTHEVEVQYYNIKRQNAEMQLAIAKDEAEKIKKKRSTVFGTLHVAHSSSLDEVDHKILEAKKALSELTTCLRERLFRWQQIEKICGFQIAHNSGLPSLTSSLYSDHSWVVMPRVSIPPYPIAGGVDDLDEDTPPIVPQFPGTVAKPAGSLARSSSLCRSRRSIVPSSPQSQRAQLPAHAPLAAHPRHPHHPQHPQHSLPSPDPDILSVSSCPALYRNEEEEEAIYFTAEKQWEVPDTASECDSLNSSSGRKPSPPSSLEMYQTLSSRKISRDELSLEDSSRGESPVTADVSRGSPECVGLTETKSMIFSPASRVYNGILEKSCSMHQLSSGIPVPHPRHTSCSSAGNDSKPVQEASNVSRVSSIPHDLCHNGEKSKKPSKIKSLFKKKSK.

The first 14 residues, 1–14 (MLLFGLLVAGVADG), serve as a signal peptide directing secretion. Residues 15–218 (CDLVPRHLRG…RPPHNWMKDF (204 aa)) are Extracellular-facing. Ser28 is modified (phosphoserine). One can recognise an EF-hand domain in the interval 67-102 (FSLEALQTIHKQMDDDKDGGIEVDESDEFIREDMKY). Ca(2+)-binding residues include Asp80, Asp82, Asp84, and Glu91. Asn135 carries N-linked (GlcNAc...) asparagine glycosylation. Residues 136–204 (WTLEDTLQWL…QLKALDVVLF (69 aa)) enclose the SAM domain. A helical transmembrane segment spans residues 219-235 (ILTISIVIGVGGCWFAY). At 236–746 (TQNKTSKEHV…IKSLFKKKSK (511 aa)) the chain is on the cytoplasmic side. A coiled-coil region spans residues 247–394 (KMMKDLESLQ…EKIKKKRSTV (148 aa)). Disordered stretches follow at residues 490 to 562 (PIVP…PDIL) and 592 to 651 (DTAS…RGSP). Ser523 bears the Phosphoserine mark. The span at 527–539 (QRAQLPAHAPLAA) shows a compositional bias: low complexity. Positions 540 to 549 (HPRHPHHPQH) are enriched in basic residues. Phosphoserine is present on residues Ser609 and Ser621. The span at 625–637 (ISRDELSLEDSSR) shows a compositional bias: basic and acidic residues. A phosphoserine mark is found at Ser640, Ser650, Ser661, Ser665, Ser680, and Ser697. Positions 684–746 (LSSGIPVPHP…IKSLFKKKSK (63 aa)) are disordered. The segment covering 723-732 (DLCHNGEKSK) has biased composition (basic and acidic residues). A compositionally biased stretch (basic residues) spans 733–746 (KPSKIKSLFKKKSK).

Oligomer with STIM1. Interacts with ORAI1. Post-translationally, glycosylated. In terms of processing, phosphorylated predominantly on Ser residues.

It localises to the endoplasmic reticulum membrane. Plays a role in mediating store-operated Ca(2+) entry (SOCE), a Ca(2+) influx following depletion of intracellular Ca(2+) stores. Functions as a highly sensitive Ca(2+) sensor in the endoplasmic reticulum which activates both store-operated and store-independent Ca(2+)-influx. Regulates basal cytosolic and endoplasmic reticulum Ca(2+) concentrations. Upon mild variations of the endoplasmic reticulum Ca(2+) concentration, translocates from the endoplasmic reticulum to the plasma membrane where it probably activates the Ca(2+) release-activated Ca(2+) (CRAC) channels ORAI1, ORAI2 and ORAI3. May inhibit STIM1-mediated Ca(2+) influx. This chain is Stromal interaction molecule 2 (Stim2), found in Mus musculus (Mouse).